A 284-amino-acid chain; its full sequence is L-ribulose-5-phosphate 3-epimerase UlaE (284 aa).

The protein belongs to the L-ribulose-5-phosphate 3-epimerase family.

The enzyme catalyses L-ribulose 5-phosphate = L-xylulose 5-phosphate. Its pathway is cofactor degradation; L-ascorbate degradation; D-xylulose 5-phosphate from L-ascorbate: step 3/4. In terms of biological role, catalyzes the isomerization of L-xylulose-5-phosphate to L-ribulose-5-phosphate. Is involved in the anaerobic L-ascorbate utilization. This Shigella flexneri serotype 5b (strain 8401) protein is L-ribulose-5-phosphate 3-epimerase UlaE.